A 160-amino-acid polypeptide reads, in one-letter code: UPF0262 protein BSUIS_A0274 (160 aa).

This sequence belongs to the UPF0262 family.

The sequence is that of UPF0262 protein BSUIS_A0274 from Brucella suis (strain ATCC 23445 / NCTC 10510).